Consider the following 538-residue polypeptide: Bifunctional purine biosynthesis protein PurH (538 aa).

Residues 6-158 (KHIPAPDLHR…KNHAYVATVV (153 aa)) form the MGS-like domain.

Belongs to the PurH family.

The enzyme catalyses (6R)-10-formyltetrahydrofolate + 5-amino-1-(5-phospho-beta-D-ribosyl)imidazole-4-carboxamide = 5-formamido-1-(5-phospho-D-ribosyl)imidazole-4-carboxamide + (6S)-5,6,7,8-tetrahydrofolate. It catalyses the reaction IMP + H2O = 5-formamido-1-(5-phospho-D-ribosyl)imidazole-4-carboxamide. It participates in purine metabolism; IMP biosynthesis via de novo pathway; 5-formamido-1-(5-phospho-D-ribosyl)imidazole-4-carboxamide from 5-amino-1-(5-phospho-D-ribosyl)imidazole-4-carboxamide (10-formyl THF route): step 1/1. Its pathway is purine metabolism; IMP biosynthesis via de novo pathway; IMP from 5-formamido-1-(5-phospho-D-ribosyl)imidazole-4-carboxamide: step 1/1. This chain is Bifunctional purine biosynthesis protein PurH, found in Brucella abortus (strain S19).